The following is a 539-amino-acid chain: Glucans biosynthesis protein D (539 aa).

Residues 1–29 (MNRRNLLKASMALAAYGSVSASGLYAARA) constitute a signal peptide (tat-type signal).

This sequence belongs to the OpgD/OpgG family. Post-translationally, predicted to be exported by the Tat system. The position of the signal peptide cleavage has not been experimentally proven.

It is found in the periplasm. It participates in glycan metabolism; osmoregulated periplasmic glucan (OPG) biosynthesis. In terms of biological role, probably involved in the control of the structural glucose backbone of osmoregulated periplasmic glucans (OPGs). The chain is Glucans biosynthesis protein D from Pseudomonas savastanoi pv. phaseolicola (strain 1448A / Race 6) (Pseudomonas syringae pv. phaseolicola (strain 1448A / Race 6)).